A 408-amino-acid polypeptide reads, in one-letter code: 5-hydroxytryptamine receptor 1A (408 aa).

Over 1–32 (MDASNNTTSWNILQRGRMGPSWRRCPVSYQII) the chain is Extracellular. Residues asparagine 5 and asparagine 6 are each glycosylated (N-linked (GlcNAc...) asparagine). A helical membrane pass occupies residues 33 to 53 (ASLFLGRSFSAGIFGNACVIA). The Cytoplasmic segment spans residues 54–67 (AIALERSLQNVANY). Residues 68-92 (LIGSLAVTDLMVSVLVLPMAAQNQV) form a helical membrane-spanning segment. Topologically, residues 93–101 (LNKWTLGQV) are extracellular. The chain crosses the membrane as a helical span at residues 102-126 (TCDIFISLDVLCCTSSILHLCAIAL). An intrachain disulfide couples cysteine 103 to cysteine 181. Serotonin is bound by residues aspartate 110 and cysteine 114. A DRY motif; important for ligand-induced conformation changes motif is present at residues 127-129 (DRY). At 127 to 146 (DRYWAITDPIDYVNKRTPRR) the chain is on the cytoplasmic side. Residues 147–168 (AAVLISITWIVGFSISIPPMLG) form a helical membrane-spanning segment. The Extracellular portion of the chain corresponds to 169–187 (WRTPEDRSDPNACRISEDP). The helical transmembrane segment at 188-210 (GYTIYSTFGAFYIPLILMLVLYG) threads the bilayer. Residues 211 to 333 (KIFKAARFRI…LARERKTVKT (123 aa)) are Cytoplasmic-facing. The interval 235–255 (TCLSVSQQSPKEKQRGAQQEL) is disordered. Lysine 332, threonine 333, and glycine 339 together coordinate 1D-myo-inositol 4-phosphate. Residues 334–357 (LGIIMGTFILCWLPFFIVALVLPF) traverse the membrane as a helical segment. Residues 358-364 (CETCHMP) are Extracellular-facing. The chain crosses the membrane as a helical span at residues 365–389 (HLLFDIITWLGYSNSLLNPIIYAYF). An NPxxY motif; important for ligand-induced conformation changes and signaling motif is present at residues 382-386 (NPIIY). Positions 389, 390, and 391 each coordinate 1D-myo-inositol 4-phosphate. Residues 390 to 408 (NKDFQSAFKKIIKCKFCRQ) lie on the Cytoplasmic side of the membrane.

It belongs to the G-protein coupled receptor 1 family. 5-hydroxytryptamine receptor subfamily. HTR1A sub-subfamily. In terms of tissue distribution, first expressed in the rostral part of the brain stem at stage 22. At later stages of development, expression is localized to serotonergic neurons. The expression pattern changes in the tadpole of stage 41 where, in addition to serotonergic neurons, expression is also localized to the inner nuclear layer (INL) of the developing retina. This expression pattern continues through to the start of metamorphosis (stage 46). In adults, expressed in the brain, in particular the telencephalon, diencephalon and mesencephalon. In the telencephalic region, expression is localized to the lateral, dorsal and medial pallium, and in the striatum, septum and amygdala. In the mesencephalic region, expression is strongest in the optic tectum and torus semicircularis with moderate levels of expression in tegmental nuclei. In diencephalon, localized to the dorsal and ventral thalamus and the preoptic area of the hypothalamus.

The protein localises to the cell membrane. With respect to regulation, G-protein coupled receptor activity is regulated by lipids: phosphatidylinositol 4-phosphate increases HTR1A-mediated activity. Functionally, G-protein coupled receptor for 5-hydroxytryptamine (serotonin). Also functions as a receptor for various drugs and psychoactive substances. Ligand binding causes a conformation change that triggers signaling via guanine nucleotide-binding proteins (G proteins) and modulates the activity of downstream effectors, such as adenylate cyclase. HTR1A is coupled to G(i)/G(o) G alpha proteins and mediates inhibitory neurotransmission: signaling inhibits adenylate cyclase activity and activates a phosphatidylinositol-calcium second messenger system that regulates the release of Ca(2+) ions from intracellular stores. Beta-arrestin family members regulate signaling by mediating both receptor desensitization and resensitization processes. Activation of the receptor may play a role in the exit from G0 phase and in promoting DNA synthesis. The polypeptide is 5-hydroxytryptamine receptor 1A (Xenopus laevis (African clawed frog)).